The following is a 314-amino-acid chain: MFDPKKFVEEAIEELRREIGDRKAIIAVSGGVDSTTAAVLTHRAIGSHLVCVFVDHGFMRKGEPERIRELLEEELGLNLRFVEAAEEFFEALRGVTDPEEKRKIIGEKFIEVFERIAEEEEAEVLVQGTIAPDIIESERGIKSHHNVGGLPEKLNLDVVEPLRDLYKDEVREVARYLGIPDEIVERMPFPGPGLAVRVLGEVTPEKVEIVREANAIVEEEVEKAVEEGKMSKPWQAFAALLDCKATGVKGDERDYGWVIAVRIVESIDAMIADVPEVPWEVLRNIQDRITSEVPEVTRVLFDITPKPPATIEFE.

The region spanning 2 to 186 (FDPKKFVEEA…LGIPDEIVER (185 aa)) is the GMPS ATP-PPase domain. 29–35 (SGGVDST) serves as a coordination point for ATP.

As to quaternary structure, heterodimer composed of a glutamine amidotransferase subunit (A) and a GMP-binding subunit (B).

The enzyme catalyses XMP + L-glutamine + ATP + H2O = GMP + L-glutamate + AMP + diphosphate + 2 H(+). It participates in purine metabolism; GMP biosynthesis; GMP from XMP (L-Gln route): step 1/1. In terms of biological role, catalyzes the synthesis of GMP from XMP. This chain is GMP synthase [glutamine-hydrolyzing] subunit B (guaAB), found in Methanopyrus kandleri (strain AV19 / DSM 6324 / JCM 9639 / NBRC 100938).